The primary structure comprises 366 residues: Nucleoporin SEH1 (366 aa).

WD repeat units follow at residues Ala-18–Arg-57, Cys-63–Asp-104, Gln-111–Glu-152, Arg-161–Glu-209, Asp-226–Leu-267, and Gly-290–Lys-329.

This sequence belongs to the WD repeat SEC13 family. As to quaternary structure, component of the nuclear pore complex (NPC). Probably part of the GATOR complex.

It localises to the nucleus. The protein resides in the nuclear pore complex. The protein localises to the lysosome membrane. In terms of biological role, probable component of the nuclear pore complex (NPC) which is involved in the trafficking of macromolecules between the cytoplasm and nucleus. Its function is as follows. As a component of the GATOR complex may function in the amino acid-sensing branch of the TORC1 signaling pathway. The chain is Nucleoporin SEH1 from Caenorhabditis briggsae.